The chain runs to 376 residues: Glutamate 5-kinase (376 aa).

Residue K15 participates in ATP binding. Substrate contacts are provided by S56, D143, and N155. S175–D176 is an ATP binding site. The region spanning K281–T358 is the PUA domain.

It belongs to the glutamate 5-kinase family.

It is found in the cytoplasm. The enzyme catalyses L-glutamate + ATP = L-glutamyl 5-phosphate + ADP. It participates in amino-acid biosynthesis; L-proline biosynthesis; L-glutamate 5-semialdehyde from L-glutamate: step 1/2. Functionally, catalyzes the transfer of a phosphate group to glutamate to form L-glutamate 5-phosphate. This Rhodopseudomonas palustris (strain TIE-1) protein is Glutamate 5-kinase.